The sequence spans 560 residues: Membrane protein insertase YidC (560 aa).

The next 6 helical transmembrane spans lie at 5-25, 334-354, 357-377, 431-451, 476-496, and 522-542; these read IINLVAAIILSLSIIFGWQYF, AIDFGWFYIITKPVFYAMNFF, YVGNFGVSILIVTVIIKLLMF, LPILVQIPVFFSIYKVLYVTI, LFGLLPFSPPSFLMIGAWPIL, and FMPLIFLFMFSSFPVGLLIYW.

This sequence belongs to the OXA1/ALB3/YidC family. Type 1 subfamily. In terms of assembly, interacts with the Sec translocase complex via SecD. Specifically interacts with transmembrane segments of nascent integral membrane proteins during membrane integration.

The protein localises to the cell inner membrane. Required for the insertion and/or proper folding and/or complex formation of integral membrane proteins into the membrane. Involved in integration of membrane proteins that insert both dependently and independently of the Sec translocase complex, as well as at least some lipoproteins. Aids folding of multispanning membrane proteins. The sequence is that of Membrane protein insertase YidC from Rickettsia massiliae (strain Mtu5).